Consider the following 345-residue polypeptide: Phenylalanine--tRNA ligase alpha subunit (345 aa).

Mg(2+) is bound at residue Glu-259.

The protein belongs to the class-II aminoacyl-tRNA synthetase family. Phe-tRNA synthetase alpha subunit type 1 subfamily. Tetramer of two alpha and two beta subunits. Requires Mg(2+) as cofactor.

Its subcellular location is the cytoplasm. The catalysed reaction is tRNA(Phe) + L-phenylalanine + ATP = L-phenylalanyl-tRNA(Phe) + AMP + diphosphate + H(+). The sequence is that of Phenylalanine--tRNA ligase alpha subunit from Nitrosomonas europaea (strain ATCC 19718 / CIP 103999 / KCTC 2705 / NBRC 14298).